The sequence spans 494 residues: Alpha-amylase A (494 aa).

The first 18 residues, 1–18 (MFLAKSLVCLALLAVANA), serve as a signal peptide directing secretion. Gln19 is modified (pyrrolidone carboxylic acid). The cysteines at positions 46 and 102 are disulfide-linked. The Ca(2+) site is built by Asn116, Arg165, and Asp174. Cys153 and Cys167 are oxidised to a cystine. Arg202 serves as a coordination point for chloride. The Nucleophile role is filled by Asp204. His208 is a Ca(2+) binding site. The active-site Proton donor is the Glu241. 2 residues coordinate chloride: Asn304 and Arg343. Intrachain disulfides connect Cys376/Cys382 and Cys448/Cys460.

This sequence belongs to the glycosyl hydrolase 13 family. In terms of assembly, monomer. Requires Ca(2+) as cofactor. The cofactor is chloride.

The catalysed reaction is Endohydrolysis of (1-&gt;4)-alpha-D-glucosidic linkages in polysaccharides containing three or more (1-&gt;4)-alpha-linked D-glucose units.. The polypeptide is Alpha-amylase A (Amy-d) (Drosophila mauritiana (Fruit fly)).